The chain runs to 425 residues: Metalloprotease AF_0655 (425 aa).

Belongs to the peptidase U62 family.

In terms of biological role, probable metalloprotease. In Archaeoglobus fulgidus (strain ATCC 49558 / DSM 4304 / JCM 9628 / NBRC 100126 / VC-16), this protein is Metalloprotease AF_0655.